We begin with the raw amino-acid sequence, 190 residues long: Potassium-transporting ATPase KdpC subunit (190 aa).

Residues 10-30 form a helical membrane-spanning segment; that stretch reads TFLFLLLITGGVYPLLTTALG.

This sequence belongs to the KdpC family. The system is composed of three essential subunits: KdpA, KdpB and KdpC.

The protein resides in the cell inner membrane. Functionally, part of the high-affinity ATP-driven potassium transport (or Kdp) system, which catalyzes the hydrolysis of ATP coupled with the electrogenic transport of potassium into the cytoplasm. This subunit acts as a catalytic chaperone that increases the ATP-binding affinity of the ATP-hydrolyzing subunit KdpB by the formation of a transient KdpB/KdpC/ATP ternary complex. The chain is Potassium-transporting ATPase KdpC subunit from Escherichia coli O81 (strain ED1a).